Here is a 61-residue protein sequence, read N- to C-terminus: uncharacterized protein (61 aa).

This is an uncharacterized protein from Treponema pallidum (strain Nichols).